The sequence spans 154 residues: Catabolic 3-dehydroquinase (154 aa).

Y25 functions as the Proton acceptor in the catalytic mechanism. Substrate-binding residues include N79, H85, and D92. The active-site Proton donor is H105. Residues 106–107 (IS) and R116 each bind substrate.

It belongs to the type-II 3-dehydroquinase family. In terms of assembly, homododecamer. Adopts a ring-like structure, composed of an arrangement of two hexameric rings stacked on top of one another.

It catalyses the reaction 3-dehydroquinate = 3-dehydroshikimate + H2O. The protein operates within aromatic compound metabolism; 3,4-dihydroxybenzoate biosynthesis; 3,4-dihydroxybenzoate from 3-dehydroquinate: step 1/2. Is involved in the catabolism of quinate. Allows the utilization of quinate as carbon source via the beta-ketoadipate pathway. The polypeptide is Catabolic 3-dehydroquinase (Sclerotinia sclerotiorum (strain ATCC 18683 / 1980 / Ss-1) (White mold)).